Here is a 270-residue protein sequence, read N- to C-terminus: UBX domain-containing protein 8 (270 aa).

Residue M1 is a topological domain, cytoplasmic. Residues 2-22 (ASRGVVGIFFLSAVPLVCLEL) form a helical membrane-spanning segment. Residues 23–33 (RRGIPDIGIKD) lie on the Lumenal side of the membrane. Residues 34–54 (FLLLCGRILLLLALLTLIISV) form a helical membrane-spanning segment. The Cytoplasmic segment spans residues 55–270 (TTSWLNSFKS…LILEEKEQTN (216 aa)). The disordered stretch occupies residues 130 to 171 (SGHKLGGDEGTSQTSFETSNREAAKSQNLPKPLTEFPSPAEQ). Phosphoserine is present on S167. The UBX domain maps to 187-263 (TAEEVVTVAL…GITVDTVLIL (77 aa)).

Interacts with SYVN1 and VCP. As to expression, expressed abundantly in ovary and testis, and weakly in all other tissues tested.

It localises to the endoplasmic reticulum membrane. Its function is as follows. Involved in endoplasmic reticulum-associated degradation (ERAD) for misfolded lumenal proteins, possibly by tethering VCP to the endoplasmic reticulum membrane. May play a role in reproduction. The sequence is that of UBX domain-containing protein 8 (UBXN8) from Homo sapiens (Human).